Consider the following 158-residue polypeptide: Cyclic pyranopterin monophosphate synthase (158 aa).

Substrate contacts are provided by residues 75–77 (LCH) and 113–114 (ME). Asp-128 is a catalytic residue.

Belongs to the MoaC family. As to quaternary structure, homohexamer; trimer of dimers.

The enzyme catalyses (8S)-3',8-cyclo-7,8-dihydroguanosine 5'-triphosphate = cyclic pyranopterin phosphate + diphosphate. It functions in the pathway cofactor biosynthesis; molybdopterin biosynthesis. Functionally, catalyzes the conversion of (8S)-3',8-cyclo-7,8-dihydroguanosine 5'-triphosphate to cyclic pyranopterin monophosphate (cPMP). This Ralstonia nicotianae (strain ATCC BAA-1114 / GMI1000) (Ralstonia solanacearum) protein is Cyclic pyranopterin monophosphate synthase.